Consider the following 611-residue polypeptide: Conglutin beta 1 (611 aa).

Positions Met1–Gly30 are cleaved as a signal peptide. Basic and acidic residues-rich tracts occupy residues Lys32 to Ser82 and Ser130 to Glu141. 2 disordered regions span residues Lys32–Gln194 and Leu384–Ser407. Low complexity predominate over residues Gln142–Gly151. A compositionally biased stretch (basic and acidic residues) spans Ser152–Arg181. The 159-residue stretch at Tyr186–Glu344 folds into the Cupin type-1 1 domain. A compositionally biased stretch (low complexity) spans Ser390–Pro402. The region spanning Phe403–Glu569 is the Cupin type-1 2 domain. Asn434 carries N-linked (GlcNAc...) asparagine glycosylation. Residues Asp476 to Val495 form a disordered region. Residues Glu483–Glu492 are compositionally biased toward acidic residues. Residue Asn519 is glycosylated (N-linked (GlcNAc...) asparagine). A compositionally biased stretch (low complexity) spans Phe580 to Gln589. A disordered region spans residues Phe580–Arg600.

This sequence belongs to the 7S seed storage protein family. In terms of assembly, component of globulins complexes which accumulate in seeds.

Seed storage protein. Accumulates during seed development and is hydrolyzed after germination to provide a carbon and nitrogen source for the developing seedling. This chain is Conglutin beta 1, found in Lupinus angustifolius (Narrow-leaved blue lupine).